A 146-amino-acid chain; its full sequence is 3-hydroxyacyl-[acyl-carrier-protein] dehydratase FabZ (146 aa).

The active site involves histidine 48.

Belongs to the thioester dehydratase family. FabZ subfamily.

Its subcellular location is the cytoplasm. It catalyses the reaction a (3R)-hydroxyacyl-[ACP] = a (2E)-enoyl-[ACP] + H2O. Involved in unsaturated fatty acids biosynthesis. Catalyzes the dehydration of short chain beta-hydroxyacyl-ACPs and long chain saturated and unsaturated beta-hydroxyacyl-ACPs. The chain is 3-hydroxyacyl-[acyl-carrier-protein] dehydratase FabZ from Teredinibacter turnerae (strain ATCC 39867 / T7901).